Consider the following 1510-residue polypeptide: Chromosome partition protein MukB (1510 aa).

75–82 (GGNGAGKS) lines the ATP pocket. Positions 346–706 (QHRLVDLSRE…LDEQISRLSQ (361 aa)) form a coiled coil. The segment at 707–824 (PDGSEDPRLN…EIPLFGCAAR (118 aa)) is flexible hinge. Coiled coils occupy residues 825 to 1154 (EKRL…AAKV) and 1248 to 1304 (IDAI…LQNI).

The protein belongs to the SMC family. MukB subfamily. As to quaternary structure, homodimerization via its hinge domain. Binds to DNA via its C-terminal region. Interacts, and probably forms a ternary complex, with MukE and MukF via its C-terminal region. The complex formation is stimulated by calcium or magnesium. Interacts with tubulin-related protein FtsZ.

Its subcellular location is the cytoplasm. The protein resides in the nucleoid. Its function is as follows. Plays a central role in chromosome condensation, segregation and cell cycle progression. Functions as a homodimer, which is essential for chromosome partition. Involved in negative DNA supercoiling in vivo, and by this means organize and compact chromosomes. May achieve or facilitate chromosome segregation by condensation DNA from both sides of a centrally located replisome during cell division. This Haemophilus influenzae (strain ATCC 51907 / DSM 11121 / KW20 / Rd) protein is Chromosome partition protein MukB.